The chain runs to 212 residues: MEITCPDWTHETAALAEGFTCVVGVDEVGRGPLAGPVTAAAVRLFPGRIPEGLNDSKKLTAPRREMLAAEIHTVAEVSIAHASVEEIDRLNILQASHLAMGRALAGLPSRPDFALIDGHMVPKGLGHRCRAIVKGDALCLSIAAASIVAKVARDRIMVDLEQQHPGYGWRTNAGYGTKDHLQALLNLGPTPHHRRSFKPVHNILYQEASISP.

Residues 20-209 enclose the RNase H type-2 domain; it reads TCVVGVDEVG…VHNILYQEAS (190 aa). A divalent metal cation contacts are provided by Asp26, Glu27, and Asp117.

The protein belongs to the RNase HII family. Requires Mn(2+) as cofactor. It depends on Mg(2+) as a cofactor.

Its subcellular location is the cytoplasm. It catalyses the reaction Endonucleolytic cleavage to 5'-phosphomonoester.. Functionally, endonuclease that specifically degrades the RNA of RNA-DNA hybrids. The sequence is that of Ribonuclease HII from Cereibacter sphaeroides (strain ATCC 17023 / DSM 158 / JCM 6121 / CCUG 31486 / LMG 2827 / NBRC 12203 / NCIMB 8253 / ATH 2.4.1.) (Rhodobacter sphaeroides).